Reading from the N-terminus, the 1673-residue chain is Protein TIC 214 (1673 aa).

6 helical membrane-spanning segments follow: residues 32–52, 70–90, 93–113, 130–150, 170–190, and 218–238; these read AGLY…ILLI, LILG…YIAF, PYTL…GNNL, LEIL…TCIF, MVFL…VLMC, and FFLV…IQSL. Basic and acidic residues-rich tracts occupy residues 264–276 and 283–298; these read LKKS…GKST and SHEK…SKLE. Disordered stretches follow at residues 264 to 302, 547 to 611, 1120 to 1146, and 1370 to 1433; these read LKKS…NEDE, VVFD…YSIR, NKQS…TDNL, and QQNQ…SEDD. Over residues 562–586 the composition is skewed to polar residues; that stretch reads DNGNIQNNSSDKTINPQNNLTNLKP. The span at 597–611 shows a compositional bias: basic and acidic residues; sequence TTEKEPKDDKSYSIR. Residues 1120 to 1135 show a composition bias toward polar residues; the sequence is NKQSLQKRNSSGNSNL. Residues 1370 to 1379 are compositionally biased toward low complexity; it reads QQNQTTTKMN. Basic and acidic residues-rich tracts occupy residues 1380-1399 and 1406-1423; these read TETK…KKTE and TKNK…KETE.

Belongs to the TIC214 family. In terms of assembly, part of the Tic complex.

The protein localises to the plastid. The protein resides in the chloroplast inner membrane. In terms of biological role, involved in protein precursor import into chloroplasts. May be part of an intermediate translocation complex acting as a protein-conducting channel at the inner envelope. In Cuscuta gronovii (Common dodder), this protein is Protein TIC 214.